The chain runs to 539 residues: Phenylalanine--tRNA ligase beta subunit (539 aa).

One can recognise a B5 domain in the interval L271 to A347. D325, D331, E334, and D335 together coordinate Mg(2+).

It belongs to the phenylalanyl-tRNA synthetase beta subunit family. Type 2 subfamily. As to quaternary structure, tetramer of two alpha and two beta subunits. The cofactor is Mg(2+).

It localises to the cytoplasm. It carries out the reaction tRNA(Phe) + L-phenylalanine + ATP = L-phenylalanyl-tRNA(Phe) + AMP + diphosphate + H(+). This Methanothrix thermoacetophila (strain DSM 6194 / JCM 14653 / NBRC 101360 / PT) (Methanosaeta thermophila) protein is Phenylalanine--tRNA ligase beta subunit.